We begin with the raw amino-acid sequence, 493 residues long: Galactose-1-phosphate uridylyltransferase (493 aa).

The protein belongs to the galactose-1-phosphate uridylyltransferase type 2 family.

The protein localises to the cytoplasm. The catalysed reaction is alpha-D-galactose 1-phosphate + UDP-alpha-D-glucose = alpha-D-glucose 1-phosphate + UDP-alpha-D-galactose. It functions in the pathway carbohydrate metabolism; galactose metabolism. This Streptococcus salivarius protein is Galactose-1-phosphate uridylyltransferase.